A 1388-amino-acid chain; its full sequence is DNA-directed RNA polymerase subunit beta' (1388 aa).

Zn(2+)-binding residues include C70, C72, C85, and C88. D461, D463, and D465 together coordinate Mg(2+). C808, C882, C889, and C892 together coordinate Zn(2+).

It belongs to the RNA polymerase beta' chain family. The RNAP catalytic core consists of 2 alpha, 1 beta, 1 beta' and 1 omega subunit. When a sigma factor is associated with the core the holoenzyme is formed, which can initiate transcription. Mg(2+) is required as a cofactor. Zn(2+) serves as cofactor.

The enzyme catalyses RNA(n) + a ribonucleoside 5'-triphosphate = RNA(n+1) + diphosphate. Functionally, DNA-dependent RNA polymerase catalyzes the transcription of DNA into RNA using the four ribonucleoside triphosphates as substrates. The polypeptide is DNA-directed RNA polymerase subunit beta' (Acidiphilium cryptum (strain JF-5)).